The chain runs to 358 residues: MNASPFLNESSPTRPTSFVLPDLVSHCKFPLSYHPNGDEIAQESVDWLDSSCPDLTAKQRRALRVLQSGELTAYCYNQATSPERLRVVSDFLTYLFHLDNISDGMMTRETDVLADVVMNAFWFTDKYMPTRGPGKEQLDEELNPGKLARDFWSRAIADCGVGVQARFKETMGLFFEAVNIQARMRDEDTIPDLESYIDVRRDTSGCKPSWVLIEYALGIDLPDHVVDHPIMQALNQGTNDLVTWSNDIFSYNVEQSRGDTHNMIVILMEYHGHTLQSAVDYVGELCAQTIDTFCENKERLPSWGPEIDDMVARYVKGLQDWIVGSLHWSFQTQRYFGKDGLDIKKHRFVKLLPLEAAK.

The Mg(2+) site is built by D99, N246, S250, and E254. The DDXXD motif motif lies at 99–103 (DNISD). 2 residues coordinate (2E,6E)-farnesyl diphosphate: R334 and Y335.

It belongs to the terpene synthase family. The cofactor is Mg(2+).

The enzyme catalyses (2E,6E)-farnesyl diphosphate = alpha-muurolene + diphosphate. It catalyses the reaction (2E,6E)-farnesyl diphosphate = gamma-muurolene + diphosphate. The catalysed reaction is (2E,6E)-farnesyl diphosphate = delta-cadinene + diphosphate. Terpene cyclase that catalyzes the cyclization of farnesyl diphosphate (FPP) to various sesquiterpenes, including alpha-muurolene, gamma-muurolene, germacrene, delta-cadinene, delta-cadinol and cubenol. The protein is Sesquiterpene synthase Agr3 of Cyclocybe aegerita (Black poplar mushroom).